A 309-amino-acid chain; its full sequence is Porphobilinogen deaminase (309 aa).

C242 carries the post-translational modification S-(dipyrrolylmethanemethyl)cysteine.

It belongs to the HMBS family. As to quaternary structure, monomer. Dipyrromethane serves as cofactor.

The enzyme catalyses 4 porphobilinogen + H2O = hydroxymethylbilane + 4 NH4(+). Its pathway is porphyrin-containing compound metabolism; protoporphyrin-IX biosynthesis; coproporphyrinogen-III from 5-aminolevulinate: step 2/4. Its function is as follows. Tetrapolymerization of the monopyrrole PBG into the hydroxymethylbilane pre-uroporphyrinogen in several discrete steps. The chain is Porphobilinogen deaminase from Shewanella sediminis (strain HAW-EB3).